The sequence spans 67 residues: Conotoxin Cl6.7 (67 aa).

Positions Met1 to Thr24 are cleaved as a signal peptide. Residues Thr25 to Ser39 constitute a propeptide that is removed on maturation. 3 disulfides stabilise this stretch: Cys43–Cys58, Cys50–Cys62, and Cys57–Cys66.

It belongs to the conotoxin O1 superfamily. Expressed by the venom duct.

It localises to the secreted. This chain is Conotoxin Cl6.7, found in Californiconus californicus (California cone).